The chain runs to 139 residues: ATP synthase epsilon chain (139 aa).

This sequence belongs to the ATPase epsilon chain family. As to quaternary structure, F-type ATPases have 2 components, CF(1) - the catalytic core - and CF(0) - the membrane proton channel. CF(1) has five subunits: alpha(3), beta(3), gamma(1), delta(1), epsilon(1). CF(0) has three main subunits: a, b and c.

The protein localises to the cell inner membrane. Produces ATP from ADP in the presence of a proton gradient across the membrane. The sequence is that of ATP synthase epsilon chain from Pseudomonas entomophila (strain L48).